Consider the following 300-residue polypeptide: uncharacterized protein (300 aa).

The tract at residues 230–251 (LRQSTSRQSISRQSISRQSTSR) is disordered. The segment covering 231–251 (RQSTSRQSISRQSISRQSTSR) has biased composition (low complexity).

This is an uncharacterized protein from Acanthamoeba polyphaga (Amoeba).